Reading from the N-terminus, the 609-residue chain is 2',5'-phosphodiesterase 12 (609 aa).

The N-terminal 42 residues, 1–42, are a transit peptide targeting the mitochondrion; that stretch reads MWRLPGARAALRVIRTAVEKLSRAEAGSQTAAGAMERAVVRC. Residues 89–99 show a composition bias toward basic residues; it reads AAAAKKSRKSR. Disordered stretches follow at residues 89–111 and 206–230; these read AAAA…CSGP and AEPE…ETDV. Low complexity-rich tracts occupy residues 100–111 and 213–224; these read PNASGGAACSGP and PSSLSPSSPSSS. Residue S217 is modified to Phosphoserine. E351, D496, and N498 together coordinate Mg(2+). D496 (proton donor/acceptor) is an active-site residue.

The protein belongs to the CCR4/nocturin family. Mg(2+) is required as a cofactor. Ubiquitous.

The protein resides in the mitochondrion matrix. It carries out the reaction Exonucleolytic cleavage of poly(A) to 5'-AMP.. Functionally, enzyme that cleaves 2',5'-phosphodiester bond linking adenosines of the 5'-triphosphorylated oligoadenylates, triphosphorylated oligoadenylates referred as 2-5A modulates the 2-5A system. Degrades triphosphorylated 2-5A to produce AMP and ATP. Also cleaves 3',5'-phosphodiester bond of oligoadenylates. Plays a role as a negative regulator of the 2-5A system that is one of the major pathways for antiviral and antitumor functions induced by interferons (IFNs). Suppression of this enzyme increases cellular 2-5A levels and decreases viral replication in cultured small-airway epithelial cells and Hela cells. The chain is 2',5'-phosphodiesterase 12 (PDE12) from Homo sapiens (Human).